Consider the following 304-residue polypeptide: Aspartate carbamoyltransferase catalytic subunit (304 aa).

Carbamoyl phosphate is bound by residues Arg56 and Thr57. Lys85 is an L-aspartate binding site. The carbamoyl phosphate site is built by Arg106, His134, and Gln137. L-aspartate contacts are provided by Arg167 and Arg226. Carbamoyl phosphate is bound by residues Leu265 and Pro266.

The protein belongs to the aspartate/ornithine carbamoyltransferase superfamily. ATCase family. As to quaternary structure, heterooligomer of catalytic and regulatory chains.

It carries out the reaction carbamoyl phosphate + L-aspartate = N-carbamoyl-L-aspartate + phosphate + H(+). It functions in the pathway pyrimidine metabolism; UMP biosynthesis via de novo pathway; (S)-dihydroorotate from bicarbonate: step 2/3. Its function is as follows. Catalyzes the condensation of carbamoyl phosphate and aspartate to form carbamoyl aspartate and inorganic phosphate, the committed step in the de novo pyrimidine nucleotide biosynthesis pathway. This chain is Aspartate carbamoyltransferase catalytic subunit, found in Picrophilus torridus (strain ATCC 700027 / DSM 9790 / JCM 10055 / NBRC 100828 / KAW 2/3).